Reading from the N-terminus, the 605-residue chain is Alpha-1,3-galactosidase B (605 aa).

Residues 1–19 (MKRIIFNFCFVWLAVSAFA) form the signal peptide. 3 PbH1 repeats span residues 428–450 (CPEV…LFST), 451–473 (PLKT…LLCG), and 484–538 (CRNV…VIED).

This sequence belongs to the glycosyl hydrolase 110 family. B subfamily.

The catalysed reaction is Hydrolysis of terminal, non-reducing branched (1-&gt;3)-alpha-D-galactosidic residues, producing free D-galactose.. It carries out the reaction Hydrolysis of terminal, non-reducing linear (1-&gt;3)-alpha-D-galactosidic residues, producing free D-galactose.. It catalyses the reaction Hydrolysis of terminal, non-reducing alpha-D-galactose residues in alpha-D-galactosides, including galactose oligosaccharides, galactomannans and galactolipids.. In terms of biological role, alpha-galactosidase. Removes both branched alpha-1,3-linked galactose residues of blood group B antigens and linear alpha-1,3-linked galactose structures. This is Alpha-1,3-galactosidase B (glaB2) from Phocaeicola vulgatus (strain ATCC 8482 / DSM 1447 / JCM 5826 / CCUG 4940 / NBRC 14291 / NCTC 11154) (Bacteroides vulgatus).